Here is an 878-residue protein sequence, read N- to C-terminus: Bifunctional heparan sulfate N-deacetylase/N-sulfotransferase 1 (878 aa).

The Cytoplasmic segment spans residues 1–17; the sequence is MSLSLKTRRFGRPVRPQ. Positions 1–169 are sufficient for localization to Golgi membrane; sequence MSLSLKTRRF…VEYGVGIIGF (169 aa). Residues 18–38 traverse the membrane as a helical; Signal-anchor for type II membrane protein segment; sequence LVLLLLFALCLLSVFISAYYL. The Lumenal portion of the chain corresponds to 39 to 878; the sequence is YGWKRGLEPS…WLREELQSTR (840 aa). The segment at 40-594 is heparan sulfate N-deacetylase 1; the sequence is GWKRGLEPSG…KRHKDIWSKE (555 aa). Residues 47-71 form a disordered region; it reads PSGSEAQSPDCDEPKISPSRLLPMK. Residues asparagine 231, asparagine 347, and asparagine 397 are each glycosylated (N-linked (GlcNAc...) asparagine). The heparan sulfate N-sulfotransferase 1 stretch occupies residues 595–878; it reads KTCDRFPKLL…WLREELQSTR (284 aa). Lysine 610 acts as the For sulfotransferase activity in catalysis. 610–614 contacts adenosine 3',5'-bisphosphate; the sequence is KTGTT. Asparagine 663 is a glycosylation site (N-linked (GlcNAc...) asparagine). The adenosine 3',5'-bisphosphate site is built by serine 708 and tryptophan 813. A disulfide bridge links cysteine 814 with cysteine 824. Residue 829–833 coordinates adenosine 3',5'-bisphosphate; sequence KGRKY.

It belongs to the sulfotransferase 1 family. NDST subfamily. Monomer.

Its subcellular location is the golgi apparatus membrane. It localises to the golgi apparatus. The protein localises to the trans-Golgi network membrane. It catalyses the reaction alpha-D-glucosaminyl-[heparan sulfate](n) + 3'-phosphoadenylyl sulfate = N-sulfo-alpha-D-glucosaminyl-[heparan sulfate](n) + adenosine 3',5'-bisphosphate + 2 H(+). It functions in the pathway glycan metabolism; heparan sulfate biosynthesis. Its pathway is glycan metabolism; heparin biosynthesis. In terms of biological role, essential bifunctional enzyme that catalyzes both the N-deacetylation and the N-sulfation of glucosamine (GlcNAc) of the glycosaminoglycan in heparan sulfate. Modifies the GlcNAc-GlcA disaccharide repeating sugar backbone to make N-sulfated heparosan, a prerequisite substrate for later modifications in heparin biosynthesis. Plays a role in determining the extent and pattern of sulfation of heparan sulfate. This is Bifunctional heparan sulfate N-deacetylase/N-sulfotransferase 1 (ndst1) from Xenopus tropicalis (Western clawed frog).